Reading from the N-terminus, the 1001-residue chain is 2-oxoglutarate dehydrogenase E1 component (1001 aa).

Belongs to the alpha-ketoglutarate dehydrogenase family. In terms of assembly, homodimer. Part of the 2-oxoglutarate dehydrogenase (OGDH) complex composed of E1 (2-oxoglutarate dehydrogenase), E2 (dihydrolipoamide succinyltransferase) and E3 (dihydrolipoamide dehydrogenase); the complex contains multiple copies of the three enzymatic components (E1, E2 and E3). Requires thiamine diphosphate as cofactor.

The catalysed reaction is N(6)-[(R)-lipoyl]-L-lysyl-[protein] + 2-oxoglutarate + H(+) = N(6)-[(R)-S(8)-succinyldihydrolipoyl]-L-lysyl-[protein] + CO2. Functionally, E1 component of the 2-oxoglutarate dehydrogenase (OGDH) complex which catalyzes the decarboxylation of 2-oxoglutarate, the first step in the conversion of 2-oxoglutarate to succinyl-CoA and CO(2). This Brucella anthropi (strain ATCC 49188 / DSM 6882 / CCUG 24695 / JCM 21032 / LMG 3331 / NBRC 15819 / NCTC 12168 / Alc 37) (Ochrobactrum anthropi) protein is 2-oxoglutarate dehydrogenase E1 component.